The following is a 327-amino-acid chain: Endo-1,4-beta-xylanase A (327 aa).

Residues 1–323 (AASGLEAAMK…KPSYTSTLNT (323 aa)) form the GH10 domain. A disulfide bridge connects residues cysteine 81 and cysteine 123. A glycan (N-linked (GlcNAc...) asparagine) is linked at asparagine 101. The Proton donor role is filled by glutamate 131. Residue glutamate 245 is the Nucleophile of the active site. An intrachain disulfide couples cysteine 273 to cysteine 279.

Belongs to the glycosyl hydrolase 10 (cellulase F) family. As to quaternary structure, monomer.

Its subcellular location is the secreted. It localises to the extracellular space. The catalysed reaction is Endohydrolysis of (1-&gt;4)-beta-D-xylosidic linkages in xylans.. It participates in glycan degradation; xylan degradation. Catalyzes the hydrolysis of the internal glycosidic bonds in heteroxylans, releasing mainly xylobiose and xylotriose. Most active on oat-spelt xylan. The chain is Endo-1,4-beta-xylanase A from Fusarium oxysporum f. sp. lycopersici (strain 4287 / CBS 123668 / FGSC 9935 / NRRL 34936) (Fusarium vascular wilt of tomato).